A 545-amino-acid chain; its full sequence is ATP synthase subunit alpha (545 aa).

173–180 (GDRQTGKT) serves as a coordination point for ATP.

It belongs to the ATPase alpha/beta chains family. F-type ATPases have 2 components, CF(1) - the catalytic core - and CF(0) - the membrane proton channel. CF(1) has five subunits: alpha(3), beta(3), gamma(1), delta(1), epsilon(1). CF(0) has three main subunits: a(1), b(2) and c(9-12). The alpha and beta chains form an alternating ring which encloses part of the gamma chain. CF(1) is attached to CF(0) by a central stalk formed by the gamma and epsilon chains, while a peripheral stalk is formed by the delta and b chains.

Its subcellular location is the cell membrane. It catalyses the reaction ATP + H2O + 4 H(+)(in) = ADP + phosphate + 5 H(+)(out). Produces ATP from ADP in the presence of a proton gradient across the membrane. The alpha chain is a regulatory subunit. This Leifsonia xyli subsp. xyli (strain CTCB07) protein is ATP synthase subunit alpha.